A 336-amino-acid chain; its full sequence is MSEVEKKLEMFVTVYYSLNVTLALSINILLLFIMKTTKSSLLKDMQYYLFNTALFEIIVSLSTYFAQCRPVANKSTLAVFCHGPCKYFGKNTCFVTFAVVQCSVVAASFSILLSFYYRYRLLKVNFKKKHKHATTFIIFSFFPTVMLLFQLLTDSNFAIVEAETREMHPDYDYVNNALIGFSDSKSPAAIIAQSLISLGVYMSPLIAFHYRRKINKILSTNTGQRIPVAYCKQLINGLLIQTLIPFCVYIPPYSYFLYSQLSGHSNLYFEYLLNIFGSFTAFINPLLTFYFVLPYRRALCKKVFKYFPSISEEGTEITTFPTTVQFQRGHTASTKF.

Helical transmembrane passes span 14-34 (VYYSLNVTLALSINILLLFIM), 48-68 (YLFNTALFEIIVSLSTYFAQC), 93-113 (CFVTFAVVQCSVVAASFSILL), 133-153 (ATTFIIFSFFPTVMLLFQLLT), 188-208 (AAIIAQSLISLGVYMSPLIAF), 237-257 (GLLIQTLIPFCVYIPPYSYFL), and 275-295 (IFGSFTAFINPLLTFYFVLPY).

It belongs to the nematode receptor-like protein srd family.

The protein localises to the membrane. The protein is Serpentine receptor class delta-51 (srd-51) of Caenorhabditis elegans.